Consider the following 377-residue polypeptide: Glutamate 5-kinase (377 aa).

K20 provides a ligand contact to ATP. Residues S59, D146, and N158 each coordinate substrate. ATP-binding positions include 178–179 (SD) and 220–226 (TGGMSTK). A PUA domain is found at 285-363 (RGTLTVDAGA…ADIEAVLGYR (79 aa)).

Belongs to the glutamate 5-kinase family.

It localises to the cytoplasm. The catalysed reaction is L-glutamate + ATP = L-glutamyl 5-phosphate + ADP. The protein operates within amino-acid biosynthesis; L-proline biosynthesis; L-glutamate 5-semialdehyde from L-glutamate: step 1/2. Its function is as follows. Catalyzes the transfer of a phosphate group to glutamate to form L-glutamate 5-phosphate. This is Glutamate 5-kinase from Myxococcus xanthus (strain DK1622).